Consider the following 764-residue polypeptide: Subtilisin-like protease SBT1.6 (764 aa).

The N-terminal stretch at 1–20 is a signal peptide; it reads MASSTIVLLLFLSFPFISFA. An Inhibitor I9 domain is found at 46–99; it reads HWYSTEFAEESRIVHVYHTVFHGFSAVVTPDEADNLRNHPAVLAVFEDRRRELH. The 504-residue stretch at 103-606 folds into the Peptidase S8 domain; that stretch reads SPQFLGLQNQ…SGHLNLGRAM (504 aa). The active-site Charge relay system is Asp131. Asn191 carries an N-linked (GlcNAc...) asparagine glycan. Catalysis depends on His205, which acts as the Charge relay system. One can recognise a PA domain in the interval 377–457; the sequence is SSASLCMENT…NEGDRIKAYA (81 aa). Ser538 acts as the Charge relay system in catalysis. A glycan (N-linked (GlcNAc...) asparagine) is linked at Asn578.

The protein belongs to the peptidase S8 family. As to expression, expressed in roots, leaves and flowers of mature plants.

The chain is Subtilisin-like protease SBT1.6 from Arabidopsis thaliana (Mouse-ear cress).